The chain runs to 520 residues: Cryptochrome DASH (520 aa).

Positions 5-141 (RTVICLLRND…RVQTFWGSTL (137 aa)) constitute a Photolyase/cryptochrome alpha/beta domain. The disordered stretch occupies residues 479–504 (SRHVNNKSSGPSSSKGRKGSSYTARQ).

Belongs to the DNA photolyase class-1 family. FAD serves as cofactor. (6R)-5,10-methylene-5,6,7,8-tetrahydrofolate is required as a cofactor.

In terms of biological role, may have a photoreceptor function. Has weak cyclobutyl pyrimidine photolyase activity when expressed in E.coli and when tested in vitro. The polypeptide is Cryptochrome DASH (cry-dash) (Danio rerio (Zebrafish)).